Here is a 359-residue protein sequence, read N- to C-terminus: 4-galactosyl-N-acetylglucosaminide 3-alpha-L-fucosyltransferase 9 (359 aa).

The Cytoplasmic segment spans residues 1–11 (MTSTSKGILRP). A helical; Signal-anchor for type II membrane protein membrane pass occupies residues 12–32 (FLIVCIILGCFMACLLIYIKP). At 33–359 (TNSWIFSPME…VGNLEKWFWN (327 aa)) the chain is on the lumenal side. Residue Asn62 is glycosylated (N-linked (GlcNAc...) asparagine). The acceptor-binding stretch occupies residues 63–168 (ETTILVWVWP…RRDSDIQVPY (106 aa)). Gln75 contributes to the a beta-D-galactosyl-(1-&gt;4)-N-acetyl-beta-D-glucosaminyl derivative binding site. 3 disulfide bridges follow: Cys82–Cys335, Cys91–Cys338, and Cys190–Cys238. Residue Asn101 is glycosylated (N-linked (GlcNAc...) asparagine). Glu137 provides a ligand contact to a beta-D-galactosyl-(1-&gt;4)-N-acetyl-beta-D-glucosaminyl derivative. The active-site Nucleophile is Glu137. A GDP-beta-L-fucose-binding site is contributed by Glu137. An N-linked (GlcNAc...) asparagine glycan is attached at Asn153. The GDP-beta-L-fucose site is built by Tyr168, Val192, Ser194, Asn195, Arg202, Val226, Tyr241, Asn246, Tyr252, Glu255, and Lys256. The segment at 169 to 326 (GFLTVSTNPF…NWRKDFTVNL (158 aa)) is donor-binding. Residues 327–359 (PRFWESHACLACDHVKRHQEYKSVGNLEKWFWN) form an acceptor-binding region.

This sequence belongs to the glycosyltransferase 10 family. Homodimer. N-glycosylated with complex-type N-glycans. The glycan alpha-D-Man-(1-&gt;3)-beta-D-Man-(1-&gt;4)-GlcNAc-(1-&gt;4)-GlcNAc is attached at Asn-153. In terms of tissue distribution, strongly expressed in forebrain and stomach, lower expression in spleen and peripheral blood leukocytes, and no expression in small intestine, colon, liver, lung, kidney, adrenal cortex or uterus. Highly expressed in granulocytes. Not expressed in monocytes.

It localises to the golgi apparatus. The protein localises to the trans-Golgi network membrane. Its subcellular location is the golgi apparatus membrane. It carries out the reaction a beta-D-galactosyl-(1-&gt;4)-N-acetyl-beta-D-glucosaminyl derivative + GDP-beta-L-fucose = a beta-D-galactosyl-(1-&gt;4)-[alpha-L-fucosyl-(1-&gt;3)]-N-acetyl-beta-D-glucosaminyl derivative + GDP + H(+). It catalyses the reaction an alpha-Neu5Ac-(2-&gt;3)-beta-D-Gal-(1-&gt;4)-beta-D-GlcNAc-(1-&gt;3)-beta-D-Gal-(1-&gt;4)-beta-D-GlcNAc derivative + GDP-beta-L-fucose = an alpha-Neu5Ac-(2-&gt;3)-beta-D-Gal-(1-&gt;4)-beta-D-GlcNAc-(1-&gt;3)-beta-D-Gal-(1-&gt;4)-[alpha-L-Fuc-(1-&gt;3)]-beta-D-GlcNAc derivative + GDP + H(+). The enzyme catalyses alpha-N-glycoloylneuraminosyl-(2-&gt;3)-beta-D-galactosyl-(1-&gt;4)-N-acetyl-beta-D-glucosaminyl-(1-&gt;3)-beta-D-galactosyl-(1-&gt;4)-N-acetyl-beta-D-glucosaminyl-(1-&gt;3)-beta-D-galactosyl-(1-&gt;4)-beta-D-glucosyl-(1&lt;-&gt;1')-ceramide + GDP-beta-L-fucose = alpha-N-glycoloylneuraminosyl-(2-&gt;3)-beta-D-galactosyl-(1-&gt;4)-N-acetyl-beta-D-glucosaminyl-(1-&gt;3)-beta-D-galactosyl-(1-&gt;4)-[alpha-L-fucosyl-(1-&gt;3)]-N-acetyl-beta-D-glucosaminyl-(1-&gt;3)-beta-D-galactosyl-(1-&gt;4)-beta-D-glucosyl-(1&lt;-&gt;1')-ceramide + GDP + H(+). The catalysed reaction is alpha-D-galactosyl-(1-&gt;3)-beta-D-galactosyl-(1-&gt;4)-N-acetyl-beta-D-glucosaminyl-(1-&gt;3)-beta-D-galactosyl-(1-&gt;4)-beta-D-glucosyl-(1&lt;-&gt;1')-ceramide + GDP-beta-L-fucose = a neolactoside IV(3)-alpha-Gal,III(3)-alpha-Fuc-nLc4Cer + GDP + H(+). It carries out the reaction a neolactoside nLc4Cer + GDP-beta-L-fucose = a neolactoside III(3)-alpha-Fuc-nLc4Cer + GDP + H(+). It catalyses the reaction an N-acetyl-alpha-neuraminyl-(2-&gt;3)-beta-D-galactosyl-(1-&gt;4)-N-acetyl-beta-D-glucosaminyl derivative + GDP-beta-L-fucose = an alpha-Neu5Ac-(2-&gt;3)-beta-D-Gal-(1-&gt;4)-[alpha-L-Fuc-(1-&gt;3)]-beta-D-GlcNAc derivative + GDP + H(+). The enzyme catalyses beta-D-Gal-(1-&gt;4)-beta-D-GlcNAc-(1-&gt;3)-beta-D-Gal-(1-&gt;4)-D-Glc + GDP-beta-L-fucose = beta-D-Gal-(1-&gt;4)-[alpha-L-Fuc-(1-&gt;3)]-beta-D-GlcNAc-(1-&gt;3)-beta-D-Gal-(1-&gt;4)-D-Glc + GDP + H(+). The catalysed reaction is an alpha-L-Fuc-(1-&gt;2)-beta-D-Gal-(1-&gt;4)-beta-D-GlcNAc derivative + GDP-beta-L-fucose = an alpha-L-Fuc-(1-&gt;2)-beta-D-Gal-(1-&gt;4)-[alpha-L-Fuc-(1-&gt;3)]-beta-D-GlcNAc derivative + GDP + H(+). It participates in protein modification; protein glycosylation. The protein operates within glycolipid biosynthesis. With respect to regulation, activated by Mn2+. Catalyzes alpha(1-&gt;3) linkage of fucosyl moiety transferred from GDP-beta-L-fucose to N-acetyl glucosamine (GlcNAc) within type 2 lactosamine (LacNAc, beta-D-Gal-(1-&gt;4)-beta-D-GlcNAc-) glycan attached to glycolipids and N- or O-linked glycoproteins. Fucosylates distal type 2 LacNAc and its fucosylated (H-type 2 LacNAc) and sialylated (sialyl-type 2 LacNAc) derivatives to form Lewis x (Lex) (CD15) and Lewis y (Ley) antigenic epitopes involved in cell adhesion and differentiation. Generates Lex epitopes in the brain, presumably playing a role in the maintenance of neuronal stemness and neurite outgrowth in progenitor neural cells. Fucosylates the internal type 2 LacNAc unit of the polylactosamine chain to form VIM-2 antigen that serves as recognition epitope for SELE. Can also modify milk oligosaccharides, in particular type 2 tetrasaccharide LNnT. The polypeptide is 4-galactosyl-N-acetylglucosaminide 3-alpha-L-fucosyltransferase 9 (Homo sapiens (Human)).